Reading from the N-terminus, the 294-residue chain is 4-hydroxy-tetrahydrodipicolinate synthase (294 aa).

Position 45 (Thr45) interacts with pyruvate. Tyr133 functions as the Proton donor/acceptor in the catalytic mechanism. Catalysis depends on Lys161, which acts as the Schiff-base intermediate with substrate. Residue Ile203 coordinates pyruvate.

Belongs to the DapA family. In terms of assembly, homotetramer; dimer of dimers.

Its subcellular location is the cytoplasm. The catalysed reaction is L-aspartate 4-semialdehyde + pyruvate = (2S,4S)-4-hydroxy-2,3,4,5-tetrahydrodipicolinate + H2O + H(+). It functions in the pathway amino-acid biosynthesis; L-lysine biosynthesis via DAP pathway; (S)-tetrahydrodipicolinate from L-aspartate: step 3/4. In terms of biological role, catalyzes the condensation of (S)-aspartate-beta-semialdehyde [(S)-ASA] and pyruvate to 4-hydroxy-tetrahydrodipicolinate (HTPA). This chain is 4-hydroxy-tetrahydrodipicolinate synthase, found in Shewanella frigidimarina (strain NCIMB 400).